Consider the following 203-residue polypeptide: HTH-type transcriptional regulator BetI (203 aa).

The HTH tetR-type domain maps to 8 to 68 (PVRRKALVDA…ATIRSLLGKL (61 aa)). A DNA-binding region (H-T-H motif) is located at residues 31-50 (TMSEIARTAGVSPALAHHYF).

It participates in amine and polyamine biosynthesis; betaine biosynthesis via choline pathway [regulation]. In terms of biological role, repressor involved in the biosynthesis of the osmoprotectant glycine betaine. It represses transcription of the choline transporter BetT and the genes of BetAB involved in the synthesis of glycine betaine. This Rhizobium meliloti (strain 1021) (Ensifer meliloti) protein is HTH-type transcriptional regulator BetI.